Reading from the N-terminus, the 61-residue chain is Large ribosomal subunit protein eL24 (61 aa).

Zn(2+) is bound by residues Cys-7, Cys-10, Cys-33, and Cys-37. The segment at 7–37 (CSFCGHEIPPGTGLMYVRNDGTMLWFCSSKC) adopts a C4-type zinc-finger fold.

It belongs to the eukaryotic ribosomal protein eL24 family. Part of the 50S ribosomal subunit. Forms a cluster with proteins L3 and L14. It depends on Zn(2+) as a cofactor.

Functionally, binds to the 23S rRNA. This is Large ribosomal subunit protein eL24 from Saccharolobus islandicus (strain M.16.27) (Sulfolobus islandicus).